Here is a 555-residue protein sequence, read N- to C-terminus: Pentatricopeptide repeat-containing protein At2g44880 (555 aa).

PPR repeat units follow at residues aspartate 41–alanine 75, aspartate 77–alanine 111, aspartate 112–arginine 142, serine 143–valine 173, aspartate 175–lysine 205, threonine 206–serine 240, tryptophan 241–threonine 267, aspartate 273–lysine 307, lysine 308–serine 342, tryptophan 343–glutamate 370, aspartate 373–alanine 407, and lysine 408–glutamate 438. The segment at isoleucine 443–asparagine 518 is type E motif. Residues tyrosine 519–asparagine 549 are type E(+) motif.

The protein belongs to the PPR family. PCMP-E subfamily.

In Arabidopsis thaliana (Mouse-ear cress), this protein is Pentatricopeptide repeat-containing protein At2g44880 (PCMP-E9).